A 151-amino-acid polypeptide reads, in one-letter code: Odorant-binding protein (151 aa).

Intrachain disulfides connect Cys38/Cys42 and Cys57/Cys149.

The protein belongs to the calycin superfamily. Lipocalin family. As to expression, expressed in salivary glands, hair and urine.

Its subcellular location is the secreted. May act as a pheromone. This Phodopus sungorus (Striped hairy-footed hamster) protein is Odorant-binding protein.